Here is a 95-residue protein sequence, read N- to C-terminus: Ferredoxin-like protein FixX (95 aa).

Belongs to the bacterial-type ferredoxin family. FixX subfamily.

In terms of biological role, could be part of an electron transfer system required for anaerobic carnitine reduction. Could be a 3Fe-4S cluster-containing protein. This Escherichia coli O157:H7 protein is Ferredoxin-like protein FixX (fixX).